A 31-amino-acid chain; its full sequence is Photosystem II reaction center protein T (31 aa).

Residues 3–23 (AFTYTLLMTLGVVTLFFAVAF) form a helical membrane-spanning segment.

It belongs to the PsbT family. PSII is composed of 1 copy each of membrane proteins PsbA, PsbB, PsbC, PsbD, PsbE, PsbF, PsbH, PsbI, PsbJ, PsbK, PsbL, PsbM, PsbT, PsbX, PsbY, Psb30/Ycf12, peripheral proteins PsbO, CyanoQ (PsbQ), PsbU, PsbV and a large number of cofactors. It forms dimeric complexes.

Its subcellular location is the cellular thylakoid membrane. Functionally, found at the monomer-monomer interface of the photosystem II (PS II) dimer, plays a role in assembly and dimerization of PSII. PSII is a light-driven water plastoquinone oxidoreductase, using light energy to abstract electrons from H(2)O, generating a proton gradient subsequently used for ATP formation. This chain is Photosystem II reaction center protein T, found in Prochlorococcus marinus (strain SARG / CCMP1375 / SS120).